Reading from the N-terminus, the 111-residue chain is Putative membrane protein insertion efficiency factor (111 aa).

Belongs to the UPF0161 family.

The protein localises to the cell inner membrane. Could be involved in insertion of integral membrane proteins into the membrane. The sequence is that of Putative membrane protein insertion efficiency factor from Methylobacterium nodulans (strain LMG 21967 / CNCM I-2342 / ORS 2060).